Reading from the N-terminus, the 389-residue chain is Type II methyltransferase M1.ScrFI (389 aa).

In terms of domain architecture, HTH cro/C1-type spans 16–71 (IKEKRLRLNMTQKELADAVGMSKNGDRTIRRWENGETCPSQLEISAILRFPEIAPF). Residues 79-387 (YKMIDLFAGI…EKMLEVLEKS (309 aa)) form the SAM-dependent MTase C5-type domain. C149 is an active-site residue.

This sequence belongs to the class I-like SAM-binding methyltransferase superfamily. C5-methyltransferase family.

The catalysed reaction is a 2'-deoxycytidine in DNA + S-adenosyl-L-methionine = a 5-methyl-2'-deoxycytidine in DNA + S-adenosyl-L-homocysteine + H(+). Its function is as follows. A methylase, recognizes the double-stranded sequence 5'-CCNGG-3', methylates C-2 on both strands, and protects the DNA from cleavage by the ScrFI endonuclease. This chain is Type II methyltransferase M1.ScrFI (scrFIAM), found in Lactococcus lactis subsp. cremoris (Streptococcus cremoris).